Reading from the N-terminus, the 153-residue chain is uncharacterized protein (153 aa).

A disordered region spans residues 16–40; that stretch reads DEQTPLLNNDGIQRTPPSAEADMSL. The segment covering 20 to 31 has biased composition (polar residues); the sequence is PLLNNDGIQRTP.

This is an uncharacterized protein from Schizosaccharomyces pombe (strain 972 / ATCC 24843) (Fission yeast).